The sequence spans 163 residues: Lipoprotein signal peptidase (163 aa).

Transmembrane regions (helical) follow at residues 11–31 (ILIAVFVVIFDQVTKYIIATT), 63–83 (KMTFFFIITIIILIALVYFFI), and 88–108 (YNLFMQVAISLLFAGALGNFI). Residues D118 and D136 contribute to the active site. A helical transmembrane segment spans residues 131 to 151 (IFNIADSSLTIGVILIIIALL).

This sequence belongs to the peptidase A8 family.

Its subcellular location is the cell membrane. It carries out the reaction Release of signal peptides from bacterial membrane prolipoproteins. Hydrolyzes -Xaa-Yaa-Zaa-|-(S,diacylglyceryl)Cys-, in which Xaa is hydrophobic (preferably Leu), and Yaa (Ala or Ser) and Zaa (Gly or Ala) have small, neutral side chains.. It functions in the pathway protein modification; lipoprotein biosynthesis (signal peptide cleavage). In terms of biological role, this protein specifically catalyzes the removal of signal peptides from prolipoproteins. The sequence is that of Lipoprotein signal peptidase from Staphylococcus aureus (strain Mu3 / ATCC 700698).